The following is a 707-amino-acid chain: Leucine-rich repeat neuronal protein 3 (707 aa).

Residues 1 to 22 (MKDAPLQIHVLLGLAITALVQA) form the signal peptide. In terms of domain architecture, LRRNT spans 23-69 (GDKKVDCPQLCTCEIRPWFTPRSIYMEASTVDCNDLGLLNFPARLPA). Residues 23-626 (GDKKVDCPQL…DGKENGKSHT (604 aa)) are Extracellular-facing. 12 LRR repeats span residues 70-91 (DTQI…TDFP), 93-114 (NLTG…NVQK), 117-138 (QLLS…CLYG), 141-162 (NLQE…AFVG), 165-186 (NLLR…WFEA), 189-210 (NLEI…NFQP), 213-234 (KLRS…ALVG), 237-258 (NLES…ALQK), 261-282 (NLKF…DFSN), 285-304 (HLKE…DSLA), 310-332 (DLRK…AFFR), and 335-358 (KLES…ESLP). N-linked (GlcNAc...) asparagine glycosylation is found at asparagine 93 and asparagine 103. A glycan (N-linked (GlcNAc...) asparagine) is linked at asparagine 223. Residues 368–421 (NPIRCDCVIRWINMNKTNIRFMEPDSLFCVDPPEFQGQNVRQVHFRDMMEICLP) enclose the LRRCT domain. N-linked (GlcNAc...) asparagine glycosylation is present at asparagine 382. The Ig-like C2-type domain occupies 421–514 (PLIAPESFPS…DLKSIMIKVG (94 aa)). An intrachain disulfide couples cysteine 444 to cysteine 496. Asparagine 522, asparagine 579, and asparagine 608 each carry an N-linked (GlcNAc...) asparagine glycan. Residues 523–614 (GSLNIKIRDI…QCVNVTTKSL (92 aa)) enclose the Fibronectin type-III domain. The chain crosses the membrane as a helical span at residues 627–647 (VFVACVGGLLGIIGVMCLFGC). The Cytoplasmic segment spans residues 648–707 (VSQEGNCENEHSYTVNHCHKPTLAFSELYPPLINLWESSKEKPASLEVKATAIGVPTSMS).

It is found in the membrane. The protein is Leucine-rich repeat neuronal protein 3 (Lrrn3) of Rattus norvegicus (Rat).